Here is a 565-residue protein sequence, read N- to C-terminus: Peptide transport periplasmic protein SapA (565 aa).

An N-terminal signal peptide occupies residues Met1–Ala23.

Belongs to the bacterial solute-binding protein 5 family.

Its subcellular location is the periplasm. In terms of biological role, involved in a peptide intake transport system that plays a role in the resistance to antimicrobial peptides. This is Peptide transport periplasmic protein SapA (sapA) from Haemophilus influenzae (strain ATCC 51907 / DSM 11121 / KW20 / Rd).